A 286-amino-acid polypeptide reads, in one-letter code: Shikimate dehydrogenase (NADP(+)) (286 aa).

Residues 20–22 (SLS) and S67 contribute to the shikimate site. K71 acts as the Proton acceptor in catalysis. 2 residues coordinate shikimate: N92 and D107. NADP(+) contacts are provided by residues 131-135 (GGGGA) and A230. Shikimate is bound at residue Y232. G253 provides a ligand contact to NADP(+).

The protein belongs to the shikimate dehydrogenase family. Homodimer.

The catalysed reaction is shikimate + NADP(+) = 3-dehydroshikimate + NADPH + H(+). It participates in metabolic intermediate biosynthesis; chorismate biosynthesis; chorismate from D-erythrose 4-phosphate and phosphoenolpyruvate: step 4/7. In terms of biological role, involved in the biosynthesis of the chorismate, which leads to the biosynthesis of aromatic amino acids. Catalyzes the reversible NADPH linked reduction of 3-dehydroshikimate (DHSA) to yield shikimate (SA). The polypeptide is Shikimate dehydrogenase (NADP(+)) (Lactococcus lactis subsp. cremoris (strain MG1363)).